We begin with the raw amino-acid sequence, 121 residues long: UPF0102 protein BVU_1879 (121 aa).

This sequence belongs to the UPF0102 family.

The protein is UPF0102 protein BVU_1879 of Phocaeicola vulgatus (strain ATCC 8482 / DSM 1447 / JCM 5826 / CCUG 4940 / NBRC 14291 / NCTC 11154) (Bacteroides vulgatus).